The following is a 117-amino-acid chain: Large ribosomal subunit protein bL20 (117 aa).

The protein belongs to the bacterial ribosomal protein bL20 family.

Its function is as follows. Binds directly to 23S ribosomal RNA and is necessary for the in vitro assembly process of the 50S ribosomal subunit. It is not involved in the protein synthesizing functions of that subunit. In Rickettsia massiliae (strain Mtu5), this protein is Large ribosomal subunit protein bL20.